Reading from the N-terminus, the 269-residue chain is Octanoyltransferase LipM (269 aa).

The 209-residue stretch at 31–239 folds into the BPL/LPL catalytic domain; it reads NHGAPVLRFY…GFSEGFEVNF (209 aa). Catalysis depends on Cys-141, which acts as the Acyl-thioester intermediate.

It belongs to the octanoyltransferase LipM family. In terms of assembly, monomer.

The catalysed reaction is octanoyl-[ACP] + L-lysyl-[protein] = N(6)-octanoyl-L-lysyl-[protein] + holo-[ACP] + H(+). Its pathway is protein modification; protein lipoylation via endogenous pathway; protein N(6)-(lipoyl)lysine from octanoyl-[acyl-carrier-protein]. In terms of biological role, catalyzes the transfer of endogenously produced octanoic acid from octanoyl-acyl-carrier-protein onto the lipoyl domain of GcvH, an intermediate carrier during protein lipoylation. The polypeptide is Octanoyltransferase LipM (Carboxydothermus hydrogenoformans (strain ATCC BAA-161 / DSM 6008 / Z-2901)).